Consider the following 541-residue polypeptide: MRLAYWMYEGTAHHGVGRIANSMRNVHAVFHAPQGDDYVNAIFAMLDRTPNFPAMTTSVVSGTDLARGTIRLPDTLRQVEERVHPDLIVVVASCSTILLQENLEIAAQHAGLQCEVMVYDANPYRMQEIVAAESLFTDLVKRFAKPQPRTERPTVNILGPASLGFHARHDLISLRRMLKTLGLEVNVVAPWGASIADLRRLPAAWLTIAPYRELGLRAAIYLEEQFGVPALLDAPIGVQPTLRWIERLRELLAQAGADVPMPPLTAFSLDGMSAPSAVPWFARTADMDSFSGKPAFVFGDATHVVGVTRFLRDELGMPIAGAGTYVKHQADWVREQLTGYVDEVLVTDEFQVVADRIAALRPELVCGTQMERHTSRRYDLNCMVISPPTHIENHLLAYRPFLGFDGADVIADEVYTTCTLGMEKHLIDLFGDAGLDLPEKTERTPVAEPAPVAATVESPQPQNEPAIAVASAPSLTSAPATPTPAAVVDPVWAADAEAMLKKVPFFVRGRVRGNVEKYARQRGHAVITAEVLLAAKEELGA.

D36 serves as a coordination point for [4Fe-4S] cluster. D286 functions as the Proton donor in the catalytic mechanism. G421–M422 serves as a coordination point for substrate.

It belongs to the ChlB/BchB/BchZ family. Protochlorophyllide reductase is composed of three subunits; BchL, BchN and BchB. Forms a heterotetramer of two BchB and two BchN subunits. [4Fe-4S] cluster serves as cofactor.

The enzyme catalyses chlorophyllide a + oxidized 2[4Fe-4S]-[ferredoxin] + 2 ADP + 2 phosphate = protochlorophyllide a + reduced 2[4Fe-4S]-[ferredoxin] + 2 ATP + 2 H2O. It functions in the pathway porphyrin-containing compound metabolism; bacteriochlorophyll biosynthesis (light-independent). In terms of biological role, component of the dark-operative protochlorophyllide reductase (DPOR) that uses Mg-ATP and reduced ferredoxin to reduce ring D of protochlorophyllide (Pchlide) to form chlorophyllide a (Chlide). This reaction is light-independent. The NB-protein (BchN-BchB) is the catalytic component of the complex. The polypeptide is Light-independent protochlorophyllide reductase subunit B (Chloroflexus aurantiacus (strain ATCC 29364 / DSM 637 / Y-400-fl)).